The chain runs to 775 residues: Beta-galactosidase 7 (775 aa).

Residues 1 to 17 (MRGGMAITAALVVVAAA) form the signal peptide. E185 (proton donor) is an active-site residue. Residue E256 is the Nucleophile of the active site. N-linked (GlcNAc...) asparagine glycosylation is found at N257, N266, N277, N358, and N602. The region spanning 689 to 775 (RGKVPKVRIW…KSLLVVADCR (87 aa)) is the SUEL-type lectin domain.

Belongs to the glycosyl hydrolase 35 family.

It localises to the secreted. It is found in the extracellular space. Its subcellular location is the apoplast. The enzyme catalyses Hydrolysis of terminal non-reducing beta-D-galactose residues in beta-D-galactosides.. In Oryza sativa subsp. japonica (Rice), this protein is Beta-galactosidase 7.